Here is a 600-residue protein sequence, read N- to C-terminus: MSASPKNEMWVVFKRLMAYVVPMKAMFIMAVLGLITYGAVDAAFIAFIKPFIDEGFSQTPAIVAGVDLPTHGGFNANKDIMLMAPIAVILMFSLRGVANFVSTYCVSYMSAQLIMDMRQQVFEHYLRLPVSYIDRENSGNLISRVTFDTEQIARASGSALISIVRDSMTAIGMLGIMFYYSWKLSLCILVIGPIMGVVISVVSKRFRKVSKQIQSAMGGVTATTEQMIKGHKNVLVFGGQKTEVERFFQVNDRNRYQNMKLAVAQSISQPLIMVIGSFALAFVLYAATWDSMKTDLTAGTFAAILGAMLAMLQPIKNLTRVNAEFQRGIAACTTVFELLDTAPEPDNGVFSIDRVEGKLAFDNVTFAYPGQEKSALNGINFEVKPGKTVALVGRSGSGKSTIASLITRFYGDLSTGDIRLDDTSIYDYQLKSLRNQVALVSQQVTLFNDTIANNIAYAYPGEVTREQIVHAAELAYAMEFIDTLPEGLDTQVGENGVLLSGGQRQRIAIARAMLRDAPVLILDEATSALDTESEKAIQKGLDNLRHNRTSIVIAHRLSTIESADEILVIDQGKIVERGNHSELIAQAGIYANLYQMQFSQ.

Transmembrane regions (helical) follow at residues 28–48, 80–100, 182–202, 267–287, and 295–315; these read IMAV…IAFI, IMLM…VANF, WKLS…ISVV, ISQP…LYAA, and DLTA…LQPI. Residues 28–327 enclose the ABC transmembrane type-1 domain; it reads IMAVLGLITY…LTRVNAEFQR (300 aa). One can recognise an ABC transporter domain in the interval 359–596; it reads LAFDNVTFAY…AGIYANLYQM (238 aa). 393–400 is an ATP binding site; it reads GRSGSGKS.

Belongs to the ABC transporter superfamily. Lipid exporter (TC 3.A.1.106) family. As to quaternary structure, homodimer.

It localises to the cell inner membrane. The enzyme catalyses ATP + H2O + lipid A-core oligosaccharideSide 1 = ADP + phosphate + lipid A-core oligosaccharideSide 2.. Its function is as follows. Involved in lipopolysaccharide (LPS) biosynthesis. Translocates lipid A-core from the inner to the outer leaflet of the inner membrane. Transmembrane domains (TMD) form a pore in the inner membrane and the ATP-binding domain (NBD) is responsible for energy generation. This Shewanella frigidimarina (strain NCIMB 400) protein is ATP-dependent lipid A-core flippase.